The following is a 220-amino-acid chain: Deoxyribose-phosphate aldolase (220 aa).

Aspartate 89 (proton donor/acceptor) is an active-site residue. The active-site Schiff-base intermediate with acetaldehyde is lysine 151. The active-site Proton donor/acceptor is lysine 180.

The protein belongs to the DeoC/FbaB aldolase family. DeoC type 1 subfamily.

The protein resides in the cytoplasm. The catalysed reaction is 2-deoxy-D-ribose 5-phosphate = D-glyceraldehyde 3-phosphate + acetaldehyde. The protein operates within carbohydrate degradation; 2-deoxy-D-ribose 1-phosphate degradation; D-glyceraldehyde 3-phosphate and acetaldehyde from 2-deoxy-alpha-D-ribose 1-phosphate: step 2/2. In terms of biological role, catalyzes a reversible aldol reaction between acetaldehyde and D-glyceraldehyde 3-phosphate to generate 2-deoxy-D-ribose 5-phosphate. The protein is Deoxyribose-phosphate aldolase of Macrococcus caseolyticus (strain JCSC5402) (Macrococcoides caseolyticum).